Reading from the N-terminus, the 197-residue chain is Elongation factor Ts (197 aa).

The involved in Mg(2+) ion dislocation from EF-Tu stretch occupies residues 81-84; it reads TDFV.

The protein belongs to the EF-Ts family.

The protein resides in the cytoplasm. Its function is as follows. Associates with the EF-Tu.GDP complex and induces the exchange of GDP to GTP. It remains bound to the aminoacyl-tRNA.EF-Tu.GTP complex up to the GTP hydrolysis stage on the ribosome. In Coprothermobacter proteolyticus (strain ATCC 35245 / DSM 5265 / OCM 4 / BT), this protein is Elongation factor Ts.